Here is a 153-residue protein sequence, read N- to C-terminus: NADPH-dependent 7-cyano-7-deazaguanine reductase (153 aa).

Cys-51 acts as the Thioimide intermediate in catalysis. Residue Asp-58 is the Proton donor of the active site. Substrate-binding positions include 73 to 75 and 92 to 93; these read VES and HE.

The protein belongs to the GTP cyclohydrolase I family. QueF type 1 subfamily.

The protein resides in the cytoplasm. The catalysed reaction is 7-aminomethyl-7-carbaguanine + 2 NADP(+) = 7-cyano-7-deazaguanine + 2 NADPH + 3 H(+). The protein operates within tRNA modification; tRNA-queuosine biosynthesis. Functionally, catalyzes the NADPH-dependent reduction of 7-cyano-7-deazaguanine (preQ0) to 7-aminomethyl-7-deazaguanine (preQ1). The protein is NADPH-dependent 7-cyano-7-deazaguanine reductase of Granulibacter bethesdensis (strain ATCC BAA-1260 / CGDNIH1).